The chain runs to 282 residues: MTDTPVTLSGSECNGDRPPENGQQPSSQTRKTTDADETQTYYGVEPSLQHLPAKENQEESGNSKGNVLPRGSEDEKILNENTEENLFVVHQAIQDLSLQETSAEDTVFQEGHPWKKIPLNSHNLDMSRQKERIVHQHLEQREDESAAHQATEIEWLGFQKSSQVDILHSKCDEEEEVWNEEINEEDVDECAEDEGEDEVRVIEFKRKYREGSPLKEESLAREDSPLSSPSSQPGTPDEQLVLGKKGDIARNSYSRYNTISYRKIRKGNTKQRIDEFESMMHL.

Composition is skewed to polar residues over residues Met1 to Glu12 and Asn21 to Arg30. The interval Met1 to Gly71 is disordered. A phosphoserine mark is found at Ser72, Ser212, Ser224, Ser228, and Ser231. A compositionally biased stretch (basic and acidic residues) spans Ser212–Ser224. The interval Ser212–Gly246 is disordered. Positions Pro225–Gly234 are enriched in polar residues. At Thr235 the chain carries Phosphothreonine. The interval Lys263–Leu282 is binds actin.

As to quaternary structure, binds actin. In terms of tissue distribution, expressed specifically by the oligodendrocytes. Highest expression seen in the spinal cord followed by brainstem, cerebellum, thalamus, and hypothalamus. In the myelin sheath, found mainly in the abaxon and the lateral few terminal loops. Its apposition to the myelinated axon, through the latter, defines an axonal subregion, termed juxtanode, at the Ranvier node-paranode junction.

It localises to the cytoplasm. Its subcellular location is the cytoskeleton. In terms of biological role, plays a role in cytoskeletal rearrangements during the late wrapping and/or compaction phases of myelinogenesis as well as in maintenance and stability of myelin sheath in the adult. May play an important role in late-stage oligodendroglia maturation, myelin/Ranvier node formation during CNS development, and in the maintenance and plasticity of related structures in the mature CNS. The chain is Ermin (Ermn) from Rattus norvegicus (Rat).